The primary structure comprises 274 residues: Deoxyribonuclease TATDN3 (274 aa).

Positions 12, 14, 107, 147, 170, and 218 each coordinate Zn(2+).

It belongs to the metallo-dependent hydrolases superfamily. TatD-type hydrolase family. Requires Mn(2+) as cofactor. Ca(2+) serves as cofactor. Mg(2+) is required as a cofactor. The cofactor is Zn(2+).

Its subcellular location is the nucleus. Its activity is regulated as follows. The 3'-exonuclease activity is sensitive to the metal ion present in the active site, whereas the AP endodeoxyribonuclease activity is observed in a variety of divalent metal cofactors. 3'-exoxonuclease activity is suppressed in the presence of Ca(2+), Zn(2+) and Ni(2+). Functionally, exhibits 3'-exonuclease activities and apurinic/apyrimidinic (AP) endonuclease (in vitro). Show preferential AP endonuclease activity on double-stranded DNA substrates and 3'- exonuclease activity on single-stranded DNA. The protein is Deoxyribonuclease TATDN3 (TATDN3) of Homo sapiens (Human).